A 308-amino-acid chain; its full sequence is Aspartate carbamoyltransferase catalytic subunit (308 aa).

2 residues coordinate carbamoyl phosphate: Arg-49 and Thr-50. Lys-77 serves as a coordination point for L-aspartate. Residues Arg-99, His-127, and Gln-130 each contribute to the carbamoyl phosphate site. Residues Arg-160 and Arg-211 each coordinate L-aspartate. The carbamoyl phosphate site is built by Ala-252 and Pro-253.

The protein belongs to the aspartate/ornithine carbamoyltransferase superfamily. ATCase family. As to quaternary structure, heterododecamer (2C3:3R2) of six catalytic PyrB chains organized as two trimers (C3), and six regulatory PyrI chains organized as three dimers (R2).

The catalysed reaction is carbamoyl phosphate + L-aspartate = N-carbamoyl-L-aspartate + phosphate + H(+). The protein operates within pyrimidine metabolism; UMP biosynthesis via de novo pathway; (S)-dihydroorotate from bicarbonate: step 2/3. Its function is as follows. Catalyzes the condensation of carbamoyl phosphate and aspartate to form carbamoyl aspartate and inorganic phosphate, the committed step in the de novo pyrimidine nucleotide biosynthesis pathway. The protein is Aspartate carbamoyltransferase catalytic subunit of Geobacillus thermodenitrificans (strain NG80-2).